Reading from the N-terminus, the 100-residue chain is Small ribosomal subunit protein uS14 (100 aa).

Belongs to the universal ribosomal protein uS14 family. In terms of assembly, part of the 30S ribosomal subunit. Contacts proteins S3 and S10.

Binds 16S rRNA, required for the assembly of 30S particles and may also be responsible for determining the conformation of the 16S rRNA at the A site. The chain is Small ribosomal subunit protein uS14 from Prochlorococcus marinus subsp. pastoris (strain CCMP1986 / NIES-2087 / MED4).